The primary structure comprises 37 residues: Cytochrome b6-f complex subunit 5 (37 aa).

The chain crosses the membrane as a helical span at residues Phe-5–Ala-25.

It belongs to the PetG family. In terms of assembly, the 4 large subunits of the cytochrome b6-f complex are cytochrome b6, subunit IV (17 kDa polypeptide, PetD), cytochrome f and the Rieske protein, while the 4 small subunits are PetG, PetL, PetM and PetN. The complex functions as a dimer.

It is found in the plastid. The protein resides in the chloroplast thylakoid membrane. Functionally, component of the cytochrome b6-f complex, which mediates electron transfer between photosystem II (PSII) and photosystem I (PSI), cyclic electron flow around PSI, and state transitions. PetG is required for either the stability or assembly of the cytochrome b6-f complex. This is Cytochrome b6-f complex subunit 5 from Capsella bursa-pastoris (Shepherd's purse).